The chain runs to 355 residues: Ubiquinone biosynthesis protein COQ4 homolog, mitochondrial (355 aa).

The Zn(2+) site is built by His134, Asp135, His138, and Glu150.

Belongs to the COQ4 family. Component of a multi-subunit COQ enzyme complex. The cofactor is Zn(2+).

Its subcellular location is the mitochondrion inner membrane. It catalyses the reaction a 4-hydroxy-3-methoxy-5-(all-trans-polyprenyl)benzoate + H(+) = a 2-methoxy-6-(all-trans-polyprenyl)phenol + CO2. It participates in cofactor biosynthesis; ubiquinone biosynthesis. In terms of biological role, lyase that catalyzes the C1-decarboxylation of 4-hydroxy-3-methoxy-5-(all-trans-polyprenyl)benzoic acid into 2-methoxy-6-(all-trans-polyprenyl)phenol during ubiquinone biosynthesis. The polypeptide is Ubiquinone biosynthesis protein COQ4 homolog, mitochondrial (Plasmodium chabaudi chabaudi).